Here is a 241-residue protein sequence, read N- to C-terminus: Endothelial protein C receptor (241 aa).

A signal peptide spans 1–20 (MLTKFLSLLLLLLLLGCAFC). The Extracellular segment spans residues 21–213 (NSDGSQSLHM…GSQTGRSYTS (193 aa)). 5 N-linked (GlcNAc...) asparagine glycosylation sites follow: asparagine 47, asparagine 64, asparagine 139, asparagine 165, and asparagine 175. The helical transmembrane segment at 214–234 (LVLGILMGCFIIAGVAVGIFL) threads the bilayer. Residues 235–241 (CTGGRRC) are Cytoplasmic-facing.

The protein resides in the membrane. Binds activated protein C. Enhances protein C activation by the thrombin-thrombomodulin complex; plays a role in the protein C pathway controlling blood coagulation. The sequence is that of Endothelial protein C receptor (Procr) from Rattus norvegicus (Rat).